Consider the following 539-residue polypeptide: MGNNGLTPQELVAYGITDTVEVVHNPDYDMLFKEETQPGLAGYERGIVTESGAVAVDTGIFTGRSPKDKYLVRDETTRDTLWWSDQGKGKNDNQPLTQETWQSLKSLVTRQLSGKRLFVVDTWCGANPDSRLSVRFITEVAWQAHFVKNMFIRPDDASLASFKPDFVVMNGAKCTNPDWQSQGLHSENFVAFNLTEKIQLIGGTWYGGEMKKGLFAIMNYLLPLKGIASMHCSANVGADGDVAVFFGLSGTGKTTLSTDPQRQLIGDDEHGWDDDGVFNFEGGCYAKTIKLSPQAEPEIYQAIRRDALLENVVVRHDGSVDYDDGSKTENTRVSYPIYHIDNIVKPVSKAGHAKKVIFLTADAFGVLPPVSRLTADQTQYHFLSGFTAKLAGTERGVTEPTPTFSACFGAAFLTLHPTQYAEVLVKRMQAAGAEAWLVNTGWNGSGKRISLKETRAIINAILSGEIAHAQTSTLPIFNLEMPDSLPGVDGKLLDPRNSYPSEAAWEEKARALAQRFITNFDKFTDTPAGEALVQAGPKL.

Substrate contacts are provided by R64, Y206, and K212. Residues K212, H231, and 247–255 (GLSGTGKTT) contribute to the ATP site. 2 residues coordinate Mn(2+): K212 and H231. Mn(2+) is bound at residue D268. ATP-binding positions include E296, R332, 448 to 449 (RI), and T454. Residue R332 coordinates substrate.

The protein belongs to the phosphoenolpyruvate carboxykinase (ATP) family. As to quaternary structure, monomer. Requires Mn(2+) as cofactor.

The protein localises to the cytoplasm. It carries out the reaction oxaloacetate + ATP = phosphoenolpyruvate + ADP + CO2. It functions in the pathway carbohydrate biosynthesis; gluconeogenesis. Its function is as follows. Involved in the gluconeogenesis. Catalyzes the conversion of oxaloacetate (OAA) to phosphoenolpyruvate (PEP) through direct phosphoryl transfer between the nucleoside triphosphate and OAA. The polypeptide is Phosphoenolpyruvate carboxykinase (ATP) (Erwinia tasmaniensis (strain DSM 17950 / CFBP 7177 / CIP 109463 / NCPPB 4357 / Et1/99)).